Here is a 727-residue protein sequence, read N- to C-terminus: Elongation factor 2 (727 aa).

A tr-type G domain is found at 19–260 (DQIRNMGICA…MSIKHLPNPL (242 aa)). Residues 28–35 (AHIDHGKT), 94–98 (DTPGH), and 148–151 (NKVD) contribute to the GTP site. Histidine 603 carries the diphthamide modification.

This sequence belongs to the TRAFAC class translation factor GTPase superfamily. Classic translation factor GTPase family. EF-G/EF-2 subfamily.

It is found in the cytoplasm. Its function is as follows. Catalyzes the GTP-dependent ribosomal translocation step during translation elongation. During this step, the ribosome changes from the pre-translocational (PRE) to the post-translocational (POST) state as the newly formed A-site-bound peptidyl-tRNA and P-site-bound deacylated tRNA move to the P and E sites, respectively. Catalyzes the coordinated movement of the two tRNA molecules, the mRNA and conformational changes in the ribosome. The polypeptide is Elongation factor 2 (Methanococcus maripaludis (strain C5 / ATCC BAA-1333)).